Consider the following 390-residue polypeptide: 8-amino-7-oxononanoate synthase (390 aa).

Residue Arg-19 coordinates substrate. 106-107 (GY) is a binding site for pyridoxal 5'-phosphate. Substrate is bound at residue His-131. Pyridoxal 5'-phosphate is bound by residues Ser-176, His-204, and Thr-233. Lys-236 bears the N6-(pyridoxal phosphate)lysine mark. Position 350 (Thr-350) interacts with substrate.

The protein belongs to the class-II pyridoxal-phosphate-dependent aminotransferase family. BioF subfamily. In terms of assembly, homodimer. Requires pyridoxal 5'-phosphate as cofactor.

It carries out the reaction 6-carboxyhexanoyl-[ACP] + L-alanine + H(+) = (8S)-8-amino-7-oxononanoate + holo-[ACP] + CO2. The protein operates within cofactor biosynthesis; biotin biosynthesis. Functionally, catalyzes the decarboxylative condensation of pimeloyl-[acyl-carrier protein] and L-alanine to produce 8-amino-7-oxononanoate (AON), [acyl-carrier protein], and carbon dioxide. The sequence is that of 8-amino-7-oxononanoate synthase from Pseudomonas putida (strain W619).